Reading from the N-terminus, the 231-residue chain is 5'-methylthioadenosine/S-adenosylhomocysteine nucleosidase (231 aa).

Residue Glu-12 is the Proton acceptor of the active site. Residues Gly-78, Val-153, and 174 to 175 (ME) each bind substrate. Catalysis depends on Asp-198, which acts as the Proton donor.

Belongs to the PNP/UDP phosphorylase family. MtnN subfamily.

It catalyses the reaction S-adenosyl-L-homocysteine + H2O = S-(5-deoxy-D-ribos-5-yl)-L-homocysteine + adenine. The enzyme catalyses S-methyl-5'-thioadenosine + H2O = 5-(methylsulfanyl)-D-ribose + adenine. The catalysed reaction is 5'-deoxyadenosine + H2O = 5-deoxy-D-ribose + adenine. The protein operates within amino-acid biosynthesis; L-methionine biosynthesis via salvage pathway; S-methyl-5-thio-alpha-D-ribose 1-phosphate from S-methyl-5'-thioadenosine (hydrolase route): step 1/2. Its function is as follows. Catalyzes the irreversible cleavage of the glycosidic bond in both 5'-methylthioadenosine (MTA) and S-adenosylhomocysteine (SAH/AdoHcy) to adenine and the corresponding thioribose, 5'-methylthioribose and S-ribosylhomocysteine, respectively. Also cleaves 5'-deoxyadenosine, a toxic by-product of radical S-adenosylmethionine (SAM) enzymes, into 5-deoxyribose and adenine. The polypeptide is 5'-methylthioadenosine/S-adenosylhomocysteine nucleosidase (Vibrio vulnificus (strain CMCP6)).